We begin with the raw amino-acid sequence, 227 residues long: Cytidylate kinase (227 aa).

An ATP-binding site is contributed by 12–20 (GPSGVGKGT).

Belongs to the cytidylate kinase family. Type 1 subfamily.

The protein localises to the cytoplasm. It carries out the reaction CMP + ATP = CDP + ADP. The catalysed reaction is dCMP + ATP = dCDP + ADP. The polypeptide is Cytidylate kinase (Shewanella denitrificans (strain OS217 / ATCC BAA-1090 / DSM 15013)).